Reading from the N-terminus, the 71-residue chain is Small ribosomal subunit protein eS17 (71 aa).

Belongs to the eukaryotic ribosomal protein eS17 family.

The polypeptide is Small ribosomal subunit protein eS17 (Pyrobaculum arsenaticum (strain DSM 13514 / JCM 11321 / PZ6)).